Reading from the N-terminus, the 100-residue chain is NAD(P)H-quinone oxidoreductase subunit 4L, chloroplastic (100 aa).

3 helical membrane-spanning segments follow: residues 1–21 (MLEN…YGLT), 30–50 (LMCL…FSSF), and 60–80 (VFAI…LAII).

It belongs to the complex I subunit 4L family. As to quaternary structure, NDH is composed of at least 16 different subunits, 5 of which are encoded in the nucleus.

The protein localises to the plastid. It is found in the chloroplast thylakoid membrane. It carries out the reaction a plastoquinone + NADH + (n+1) H(+)(in) = a plastoquinol + NAD(+) + n H(+)(out). The catalysed reaction is a plastoquinone + NADPH + (n+1) H(+)(in) = a plastoquinol + NADP(+) + n H(+)(out). In terms of biological role, NDH shuttles electrons from NAD(P)H:plastoquinone, via FMN and iron-sulfur (Fe-S) centers, to quinones in the photosynthetic chain and possibly in a chloroplast respiratory chain. The immediate electron acceptor for the enzyme in this species is believed to be plastoquinone. Couples the redox reaction to proton translocation, and thus conserves the redox energy in a proton gradient. In Staurastrum punctulatum (Green alga), this protein is NAD(P)H-quinone oxidoreductase subunit 4L, chloroplastic.